A 246-amino-acid chain; its full sequence is MSGHSKWHNIQAKKGKVDAKRGKIFTKIGKEIVVAVKQGGPSADSNPRLRDVIAKAKANNMPNDTIERSIKKASGELNAVDYETITYEGYGPAGIAVLVDVLTDNKNRSAGNVRYAFTKQGGNMGSTGCVSFMFQSKGQIVIEKKDGLDEDELMMMALDAGAEDFESEDEVYVVTTSQEDFGTVREALEAEGLEFLEAEIKMVPDTYTAIDEDTATKFQKMLDVLEDDDDVQNVYHNAEFPEGWEE.

It belongs to the TACO1 family.

It is found in the cytoplasm. The sequence is that of Probable transcriptional regulatory protein CLJ_B3338 from Clostridium botulinum (strain 657 / Type Ba4).